We begin with the raw amino-acid sequence, 342 residues long: UDP-N-acetylglucosamine transporter YEA4 (342 aa).

Topologically, residues 1–6 (MWNSLK) are cytoplasmic. Residues 7 to 27 (AFALVFGGCCSNVITFETLMS) form a helical membrane-spanning segment. Over 28 to 35 (NETGSINN) the chain is Lumenal. The chain crosses the membrane as a helical span at residues 36–56 (LITFCQFLFVTCQGLPEFLDV). Over 57–61 (HQPFP) the chain is Cytoplasmic. The helical transmembrane segment at 62 to 82 (YFKPLKTPLHVYVITVVLFYI) threads the bilayer. Over 83 to 96 (SSTTNNNVFKYNIS) the chain is Lumenal. The chain crosses the membrane as a helical span at residues 97–117 (IPIHIVFRCFGTVITMFTCWL). At 118 to 123 (LNGRKY) the chain is on the cytoplasmic side. Residues 124 to 144 (TKIQILSTLFLTIGAIIASLF) form a helical membrane-spanning segment. Residues 145-168 (KDADFRYQDLKLQAWKIGSDQSVD) lie on the Lumenal side of the membrane. A helical transmembrane segment spans residues 169-189 (LTFIFGICILVLSSFTSSLLS). Topologically, residues 190-253 (AYNERTYQKY…GGKILVPREE (64 aa)) are cytoplasmic. A helical membrane pass occupies residues 254 to 274 (TLLLFNVLTQYFCVKGVNILA). The Lumenal portion of the chain corresponds to 275-307 (SKTNALTLSITLLVRKFISLLLSVRLFDNNLSY). The helical transmembrane segment at 308–328 (TGYIGVYLVFFGAFIYSLGSI) threads the bilayer. Residues 329–342 (HPRQNDKGAIKKSK) lie on the Cytoplasmic side of the membrane.

The protein belongs to the nucleotide-sugar transporter family. SLC35B subfamily.

The protein resides in the endoplasmic reticulum. It localises to the endoplasmic reticulum membrane. Sugar transporter that specifically mediates the transport of UDP-N-acetylglucosamine (UDP-GlcNAc) and is required for cell wall chitin synthesis. This chain is UDP-N-acetylglucosamine transporter YEA4 (YEA4), found in Saccharomyces cerevisiae (strain ATCC 204508 / S288c) (Baker's yeast).